Reading from the N-terminus, the 447-residue chain is Phosphoglucosamine mutase (447 aa).

Catalysis depends on serine 103, which acts as the Phosphoserine intermediate. 4 residues coordinate Mg(2+): serine 103, aspartate 242, aspartate 244, and aspartate 246. The residue at position 103 (serine 103) is a Phosphoserine.

Belongs to the phosphohexose mutase family. The cofactor is Mg(2+). Post-translationally, activated by phosphorylation.

It carries out the reaction alpha-D-glucosamine 1-phosphate = D-glucosamine 6-phosphate. In terms of biological role, catalyzes the conversion of glucosamine-6-phosphate to glucosamine-1-phosphate. The chain is Phosphoglucosamine mutase from Marinobacter nauticus (strain ATCC 700491 / DSM 11845 / VT8) (Marinobacter aquaeolei).